The sequence spans 225 residues: UPF0758 protein BCE_4545 (225 aa).

One can recognise an MPN domain in the interval 103 to 225 (SIRSPEDCAT…FVSLKEKGHI (123 aa)). Residues H174, H176, and D187 each contribute to the Zn(2+) site. A JAMM motif motif is present at residues 174-187 (HNHPSGDPAPSRED).

The protein belongs to the UPF0758 family.

The chain is UPF0758 protein BCE_4545 from Bacillus cereus (strain ATCC 10987 / NRS 248).